A 695-amino-acid polypeptide reads, in one-letter code: G-protein coupled receptor-associated protein LMBRD2 (695 aa).

Topologically, residues Met1–Ala5 are extracellular. Residues Leu6 to Leu21 traverse the membrane as a helical segment. Over His22–Arg32 the chain is Cytoplasmic. A helical membrane pass occupies residues Leu33–Pro53. Residues Leu54–Gly105 lie on the Extracellular side of the membrane. Asn78 carries N-linked (GlcNAc...) asparagine glycosylation. Residues Ile106–Leu126 traverse the membrane as a helical segment. At Pro127–Glu150 the chain is on the cytoplasmic side. The helical transmembrane segment at Asn151 to Val171 threads the bilayer. The Extracellular segment spans residues Asn172 to Gly186. A helical membrane pass occupies residues Ile187–Val207. Residues Glu208–Lys387 are Cytoplasmic-facing. Residues Tyr227–His262 are a coiled coil. A helical membrane pass occupies residues Ile388–Phe408. The Extracellular segment spans residues Ser409–Tyr432. The helical transmembrane segment at Ile433 to Phe453 threads the bilayer. Residues Arg454–Ser473 are Cytoplasmic-facing. Residues Leu474 to Gly494 traverse the membrane as a helical segment. Residues Leu495–Val521 are Extracellular-facing. The helical transmembrane segment at Leu522–Ile542 threads the bilayer. At Ala543–Val695 the chain is on the cytoplasmic side. The stretch at Leu571–Tyr603 forms a coiled coil. The tract at residues Lys581–Val628 is disordered. Positions Arg588–Asn624 are enriched in basic and acidic residues. At Ser633 the chain carries Phosphoserine. Positions Ala662–Arg682 are disordered.

The protein belongs to the LIMR family.

It localises to the cell membrane. Recruited to ligand-activated beta-2 adrenergic receptor/ADRB2, it negatively regulates the adrenergic receptor signaling pathway. May also regulate other G-protein coupled receptors including type-1 angiotensin II receptor/AGTR1. This chain is G-protein coupled receptor-associated protein LMBRD2, found in Homo sapiens (Human).